The following is a 137-amino-acid chain: Large ribosomal subunit protein uL11 (137 aa).

The protein belongs to the universal ribosomal protein uL11 family. In terms of assembly, part of the ribosomal stalk of the 50S ribosomal subunit. Interacts with L10 and the large rRNA to form the base of the stalk. L10 forms an elongated spine to which L12 dimers bind in a sequential fashion forming a multimeric L10(L12)X complex. Post-translationally, one or more lysine residues are methylated.

Functionally, forms part of the ribosomal stalk which helps the ribosome interact with GTP-bound translation factors. The polypeptide is Large ribosomal subunit protein uL11 (Mycoplasma pneumoniae (strain ATCC 29342 / M129 / Subtype 1) (Mycoplasmoides pneumoniae)).